We begin with the raw amino-acid sequence, 135 residues long: Small ribosomal subunit protein uS9 (135 aa).

A compositionally biased stretch (basic and acidic residues) spans 108-118 (VGDSRRTEPHK). The segment at 108–135 (VGDSRRTEPHKPNRSTKGPRAKRQKSYR) is disordered. Basic residues predominate over residues 119 to 135 (PNRSTKGPRAKRQKSYR).

It belongs to the universal ribosomal protein uS9 family. In terms of assembly, part of the 30S ribosomal subunit.

The sequence is that of Small ribosomal subunit protein uS9 from Thermococcus kodakarensis (strain ATCC BAA-918 / JCM 12380 / KOD1) (Pyrococcus kodakaraensis (strain KOD1)).